Consider the following 252-residue polypeptide: uncharacterized protein (252 aa).

2 stretches are compositionally biased toward polar residues: residues 108-122 (RTTM…SSSE) and 136-153 (MPNT…NSQS). Positions 108–252 (RTTMRQGRFP…LIWNDSSSSK (145 aa)) are disordered. Residues 154–172 (TEKEDAMYSKDNGFEDRSK) show a composition bias toward basic and acidic residues. The span at 201–226 (VKSTDSAFSGQENSEAFPSRTSNLGS) shows a compositional bias: polar residues.

The protein resides in the cytoplasm. The protein localises to the mitochondrion. It is found in the nucleus. This is an uncharacterized protein from Schizosaccharomyces pombe (strain 972 / ATCC 24843) (Fission yeast).